The following is an 88-amino-acid chain: UPF0250 protein Sama_2593 (88 aa).

Belongs to the UPF0250 family.

This chain is UPF0250 protein Sama_2593, found in Shewanella amazonensis (strain ATCC BAA-1098 / SB2B).